We begin with the raw amino-acid sequence, 161 residues long: Small ribosomal subunit protein uS19 (161 aa).

A compositionally biased stretch (basic residues) spans 1–19 (MARQKKYSGKGGARKKNKQ). Residues 1–26 (MARQKKYSGKGGARKKNKQKQSVAPR) form a disordered region.

The protein belongs to the universal ribosomal protein uS19 family.

Protein S19 forms a complex with S13 that binds strongly to the 16S ribosomal RNA. This Methanococcus maripaludis (strain C7 / ATCC BAA-1331) protein is Small ribosomal subunit protein uS19.